Consider the following 54-residue polypeptide: MCTTLFLLSTLAMLWRRRFANRVQPEPSGADGAVVGSRSERDLQSSGRKEEPLK.

A lipid anchor (S-palmitoyl cysteine) is attached at cysteine 2. The tract at residues 24–54 is disordered; that stretch reads QPEPSGADGAVVGSRSERDLQSSGRKEEPLK. Positions 38–54 are enriched in basic and acidic residues; that stretch reads RSERDLQSSGRKEEPLK.

This sequence belongs to the PRCD family. Interacts with RHO/rhodopsin; the interaction promotes PRCD stability. In terms of processing, palmitoylated at Cys-2. Palmitoylation is essential for protein stability and trafficking to the photoreceptor outer segment, but does not appear to be essential for membrane localization. Probably palmitoylated by ZDHHC3. Phosphorylated. Expressed in retina.

The protein localises to the cell projection. The protein resides in the cilium. It localises to the photoreceptor outer segment. It is found in the membrane. Its subcellular location is the endoplasmic reticulum. The protein localises to the golgi apparatus. Functionally, involved in vision. This is Photoreceptor disk component PRCD from Canis lupus familiaris (Dog).